The chain runs to 316 residues: Olfactory receptor 10H28 (316 aa).

Topologically, residues 1 to 26 are extracellular; that stretch reads MPGQNYSTISEFILFGFSAFPHQMLP. A glycan (N-linked (GlcNAc...) asparagine) is linked at Asn-5. Residues 27-47 traverse the membrane as a helical segment; it reads ALFLLYLLMYLFTLLGNLVIM. At 48–57 the chain is on the cytoplasmic side; sequence AAIWTEHRLH. A helical membrane pass occupies residues 58–78; that stretch reads TPMYLFLCALSISEILFTVVI. Residues 79 to 100 are Extracellular-facing; sequence TPRMLSDMLSTHRSITFIACAN. Cys-98 and Cys-190 are disulfide-bonded. A helical membrane pass occupies residues 101–121; sequence QLFFSFTFGYTHSFLLVVMGY. The Cytoplasmic segment spans residues 122–144; that stretch reads DRYVAICRPLHYHALMSLQGCAR. Residues 145-165 traverse the membrane as a helical segment; sequence LVAWSWAGGSLIGMALTIIIF. Over 166–207 the chain is Extracellular; the sequence is HLTFCESNVIHHILCHVFSLLKLACGERTAFVTIAVILVCVT. A helical membrane pass occupies residues 208–228; the sequence is PLIGCLVFIILSYIFIVAAIL. The Cytoplasmic segment spans residues 229–241; the sequence is RIPSTEGRHKTFS. The chain crosses the membrane as a helical span at residues 242–262; the sequence is TCASHLTVVIVHYGFASIIYL. Residues 263 to 273 lie on the Extracellular side of the membrane; the sequence is KSRGLYSQYTD. Residues 274–294 traverse the membrane as a helical segment; it reads TLMSTTYTVFTPFLSPIIFSL. The Cytoplasmic portion of the chain corresponds to 295–316; sequence RNKELKNAIIKSFHRNVCQQSI.

Belongs to the G-protein coupled receptor 1 family.

The protein resides in the cell membrane. Odorant receptor. In Mus musculus (Mouse), this protein is Olfactory receptor 10H28.